The primary structure comprises 148 residues: Large ribosomal subunit protein bL9 (148 aa).

The protein belongs to the bacterial ribosomal protein bL9 family.

In terms of biological role, binds to the 23S rRNA. This chain is Large ribosomal subunit protein bL9, found in Bacillus mycoides (strain KBAB4) (Bacillus weihenstephanensis).